A 574-amino-acid chain; its full sequence is VAO-type flavoprotein oxidase VAO615 (574 aa).

Positions 1-17 are cleaved as a signal peptide; that stretch reads MPASLLRFLALAGTAVG. Disulfide bonds link Cys-28–Cys-572, Cys-64–Cys-77, Cys-108–Cys-118, and Cys-450–Cys-476. Asn-47 carries an N-linked (GlcNAc...) asparagine glycan. A glycan (N-linked (GlcNAc...) asparagine) is linked at Asn-105. One can recognise an FAD-binding PCMH-type domain in the interval 120 to 299; the sequence is LGNYPSYVVN…LSMTARLHRD (180 aa). Asn-129, Asn-211, Asn-310, Asn-346, and Asn-438 each carry an N-linked (GlcNAc...) asparagine glycan. Positions 157-222 form a cross-link, 6-(S-cysteinyl)-8alpha-(pros-histidyl)-FAD (His-Cys); that stretch reads HDYLGKSTGK…TGHRIVGGTC (66 aa).

This sequence belongs to the oxygen-dependent FAD-linked oxidoreductase family. FAD is required as a cofactor. Post-translationally, the FAD cofactor is bound via a bicovalent 6-S-cysteinyl, 8alpha-N1-histidyl FAD linkage.

It localises to the secreted. Functionally, probably oxidoreductase that, when reduced, rapidly reacts with molecular oxygen, a hallmark of flavoprotein oxidases. A large panel of alcohols, including carbohydrates, steroids and secondary alcohols were tested as potential substrates, but none has been identified so far. The sequence is that of VAO-type flavoprotein oxidase VAO615 from Thermothelomyces thermophilus (strain ATCC 42464 / BCRC 31852 / DSM 1799) (Sporotrichum thermophile).